A 261-amino-acid polypeptide reads, in one-letter code: MRRIVIKVGSALLSRGHEMAMDRMESLCRFIAELKQKGDEVILVTSAAVAAGYTALALDKRQLPNRQALAAIGQPLLMNLYHQTLAPLGILPAQMLLSAYDFDSRKRTENARNTIEVLLSHGVLPIINENDAVATKELDMLAVFGDNDRLSAHVAHYFSAEILLILSDIDGYYDKNPCEFPDAKIRRVVNFLTPEELEAEVSPNNAFATGGIVTKLQAADFLMKRGQKMFLANGFNLGDARSFLLEGIHCQGTLFVQGGES.

K7 serves as a coordination point for ATP. Substrate-binding residues include S46, D131, and N147. ATP is bound by residues 167–168 (SD) and 209–215 (TGGIVTK).

It belongs to the glutamate 5-kinase family.

Its subcellular location is the cytoplasm. The enzyme catalyses L-glutamate + ATP = L-glutamyl 5-phosphate + ADP. It functions in the pathway amino-acid biosynthesis; L-proline biosynthesis; L-glutamate 5-semialdehyde from L-glutamate: step 1/2. Functionally, catalyzes the transfer of a phosphate group to glutamate to form L-glutamate 5-phosphate. The polypeptide is Glutamate 5-kinase (Wolinella succinogenes (strain ATCC 29543 / DSM 1740 / CCUG 13145 / JCM 31913 / LMG 7466 / NCTC 11488 / FDC 602W) (Vibrio succinogenes)).